The primary structure comprises 121 residues: Small ribosomal subunit protein uS13 (121 aa).

Residues His-91–Lys-121 form a disordered region. Basic residues predominate over residues Ala-106–Lys-121.

Belongs to the universal ribosomal protein uS13 family. Part of the 30S ribosomal subunit. Forms a loose heterodimer with protein S19. Forms two bridges to the 50S subunit in the 70S ribosome.

Located at the top of the head of the 30S subunit, it contacts several helices of the 16S rRNA. In the 70S ribosome it contacts the 23S rRNA (bridge B1a) and protein L5 of the 50S subunit (bridge B1b), connecting the 2 subunits; these bridges are implicated in subunit movement. Contacts the tRNAs in the A and P-sites. The polypeptide is Small ribosomal subunit protein uS13 (Bacillus mycoides (strain KBAB4) (Bacillus weihenstephanensis)).